Here is a 180-residue protein sequence, read N- to C-terminus: Probable galaptin lec-8 (180 aa).

Residues 11 to 138 (SAHAIREQLR…AAHIDEISFS (128 aa)) form the Galectin domain.

The polypeptide is Probable galaptin lec-8 (lec-8) (Caenorhabditis elegans).